The chain runs to 581 residues: Leucine-rich repeat transmembrane neuronal protein 3 (581 aa).

The signal sequence occupies residues 1–30 (MGFNVIRLLSGSAVALVIAPTVLLTMLSSA). In terms of domain architecture, LRRNT spans 31–61 (ERGCPKGCRCEGKMVYCESQKLQEIPSSISA). At 31 to 419 (ERGCPKGCRC…ADAEHISFHK (389 aa)) the chain is on the extracellular side. LRR repeat units follow at residues 63–83 (CLGLSLRYNSLQKLKYNQFKG), 86–107 (QLTWLYLDHNHISNIDENAFNG), 110–131 (RLKELILSSNRISYFLNNTFRP), 134–155 (NLRNLDLSYNQLHSLGSEQFRG), 158–179 (KLLSLHLRSNSLRTIPVRIFQD), 182–203 (NLELLDLGYNRIRSLARNVFAG), 206–226 (RLKELHLEHNQFSKLNLALFP), 230–251 (SLQNLYLQWNKISVIGQTMSWT), 254–275 (SLQRLDLSGNEIEAFSGPSVFQ), and 279–300 (NLQRLNLDSNKLTFIGQEILDS). The N-linked (GlcNAc...) asparagine glycan is linked to N126. The region spanning 312–363 (NIWECSRNICSLVNWLKSFKGLRENTIICASPKELQGVNVIDAVKNYSICGK) is the LRRCT domain. A glycan (N-linked (GlcNAc...) asparagine) is linked at N357. Residues 377 to 408 (KPTFKPKLPRPKHESKPPLPPTVGATEPGPET) form a disordered region. A helical transmembrane segment spans residues 420–440 (IIAGSVALFLSVLVILLVIYV). Over 441–581 (SWKRYPASMK…RISDHKQQLA (141 aa)) the chain is Cytoplasmic.

It belongs to the LRRTM family. Expressed in neuronal tissues.

The protein localises to the cell membrane. The protein resides in the postsynaptic cell membrane. Functionally, exhibits a limited synaptogenic activity in vitro, restricted to excitatory presynaptic differentiation. May play a role in the development and maintenance of the vertebrate nervous system. This Homo sapiens (Human) protein is Leucine-rich repeat transmembrane neuronal protein 3 (LRRTM3).